A 619-amino-acid chain; its full sequence is Calnexin (619 aa).

An N-terminal signal peptide occupies residues M1–S21. A Ca(2+)-binding site is contributed by D109. C152 and C186 are disulfide-bonded. Y156, K158, Y177, and D184 together coordinate an alpha-D-glucoside. N203 carries an N-linked (GlcNAc...) asparagine glycan. Residues I268–E401 are p domain (Extended arm). 5 tandem repeats follow at residues D270–R282, D287–N299, D306–E318, D325–D337, and G340–P350. 4 X approximate repeats regions lie at residues D270–D337 and G340–P397. A disulfide bond links C352 and C358. Tandem repeats lie at residues G359–P369, G373–P383, and G387–P397. E417 provides a ligand contact to an alpha-D-glucoside. D428 is a binding site for Ca(2+). The chain crosses the membrane as a helical span at residues L481–F501. The interval G538 to D619 is disordered. Residues P547–E557 are compositionally biased toward polar residues. The span at E566 to A577 shows a compositional bias: low complexity. The N-linked (GlcNAc...) asparagine glycan is linked to N571. Residues H585–K601 show a composition bias toward basic and acidic residues. Positions A610–D619 are enriched in basic residues.

Belongs to the calreticulin family. Post-translationally, glycosylation is important for its biological activity. Expressed ubiquitously in every blastomere of the embryo up to the gastrulation stage. Expression becomes gradually restricted to the head and tail regions at the comma stage during embryogenesis. During postembryonic development, expressed prominently in the H-shaped excretory cell, in the neurons of head (including ASK and ADL) and tail (including PHA and PHB), in the dorsal and ventral nerve cords, and in the spermatheca. Expressed in the spicules of the male tail (at protein level).

The protein resides in the endoplasmic reticulum membrane. Its subcellular location is the cytoplasm. It is found in the perinuclear region. It localises to the cytoplasmic vesicle. In terms of biological role, calcium-binding protein that interacts with newly synthesized monoglucosylated glycoproteins in the endoplasmic reticulum. It may act in assisting protein assembly and/or in the retention within the ER of unassembled protein subunits. It seems to play a major role in the quality control apparatus of the ER by the retention of incorrectly folded proteins. Required for embryogenesis and larval development under heat and ER stress conditions. May be important for germ cell development. Involved in neuronal necrotic cell death. This Caenorhabditis elegans protein is Calnexin (cnx-1).